Here is a 431-residue protein sequence, read N- to C-terminus: Histidine--tRNA ligase (431 aa).

The protein belongs to the class-II aminoacyl-tRNA synthetase family. Homodimer.

The protein localises to the cytoplasm. It carries out the reaction tRNA(His) + L-histidine + ATP = L-histidyl-tRNA(His) + AMP + diphosphate + H(+). The protein is Histidine--tRNA ligase of Finegoldia magna (strain ATCC 29328 / DSM 20472 / WAL 2508) (Peptostreptococcus magnus).